A 347-amino-acid polypeptide reads, in one-letter code: Holliday junction branch migration complex subunit RuvB (347 aa).

Residues 1-186 (MKDENSINFL…FGITARFELY (186 aa)) are large ATPase domain (RuvB-L). ATP contacts are provided by residues L25, R26, G67, K70, T71, T72, 133–135 (EDY), R176, Y186, and R223. T71 contacts Mg(2+). The interval 187–257 (SEIELVEIIK…IVAIGLEMLR (71 aa)) is small ATPAse domain (RuvB-S). The head domain (RuvB-H) stretch occupies residues 260–347 (GEGLDEQDRN…NLNENQRVSF (88 aa)). DNA is bound by residues R315 and R320.

The protein belongs to the RuvB family. As to quaternary structure, homohexamer. Forms an RuvA(8)-RuvB(12)-Holliday junction (HJ) complex. HJ DNA is sandwiched between 2 RuvA tetramers; dsDNA enters through RuvA and exits via RuvB. An RuvB hexamer assembles on each DNA strand where it exits the tetramer. Each RuvB hexamer is contacted by two RuvA subunits (via domain III) on 2 adjacent RuvB subunits; this complex drives branch migration. In the full resolvosome a probable DNA-RuvA(4)-RuvB(12)-RuvC(2) complex forms which resolves the HJ.

The protein localises to the cytoplasm. It carries out the reaction ATP + H2O = ADP + phosphate + H(+). Functionally, the RuvA-RuvB-RuvC complex processes Holliday junction (HJ) DNA during genetic recombination and DNA repair, while the RuvA-RuvB complex plays an important role in the rescue of blocked DNA replication forks via replication fork reversal (RFR). RuvA specifically binds to HJ cruciform DNA, conferring on it an open structure. The RuvB hexamer acts as an ATP-dependent pump, pulling dsDNA into and through the RuvAB complex. RuvB forms 2 homohexamers on either side of HJ DNA bound by 1 or 2 RuvA tetramers; 4 subunits per hexamer contact DNA at a time. Coordinated motions by a converter formed by DNA-disengaged RuvB subunits stimulates ATP hydrolysis and nucleotide exchange. Immobilization of the converter enables RuvB to convert the ATP-contained energy into a lever motion, pulling 2 nucleotides of DNA out of the RuvA tetramer per ATP hydrolyzed, thus driving DNA branch migration. The RuvB motors rotate together with the DNA substrate, which together with the progressing nucleotide cycle form the mechanistic basis for DNA recombination by continuous HJ branch migration. Branch migration allows RuvC to scan DNA until it finds its consensus sequence, where it cleaves and resolves cruciform DNA. In Borreliella afzelii (strain PKo) (Borrelia afzelii), this protein is Holliday junction branch migration complex subunit RuvB.